The primary structure comprises 1118 residues: Repetin (1118 aa).

Residues 1–91 (MPQLLNSILN…VQACHHKLDS (91 aa)) form an S-100-like region. 2 consecutive EF-hand domains span residues 13–48 (KVFQDYAEYHGVGASLSKKELKQLLLTEFGDILRRP) and 49–84 (NDPETVETILEHLDRDRNGYVDFHEYLLLVFQLVQA). The Ca(2+) site is built by S27, E32, D62, D64, N66, Y68, and E73. The tract at residues 94-1118 (YGSRTSSQKE…YVQEQAAYQY (1025 aa)) is disordered. A compositionally biased stretch (basic and acidic residues) spans 100-115 (SQKEHDQEGTRSHKFS). Residues 138–148 (SEGQHQNVQHD) show a composition bias toward polar residues. 2 stretches are compositionally biased toward basic and acidic residues: residues 149–164 (QSQRQDKDSERHDTDP) and 172–186 (FHGDSHYGHSERQDT). The segment covering 237-252 (GQSKTSGQQSSHGQSG) has biased composition (low complexity). Positions 259–299 (YSSQTSQQESDSYEQYGSQHQKSGNSQTERQGQNSQYGQTN) are enriched in polar residues. Tandem repeats lie at residues 273–284 (QYGSQHQKSGNS), 285–296 (QTERQGQNSQYG), 297–308 (QTNKKGHSSYHE), 309–320 (QTEGQGQSFHYG), 321–332 (QKGRKDQSFQQG), 333–344 (QKGRKDQSPHLG), 345–356 (QKGRQDQSPHRG), 357–368 (QKGRQDQSPHQG), 369–380 (QKGRQDQSPHRG), 381–392 (QKGRQDQSPHQG), 393–404 (QKGRQDQSPHLG), 405–416 (QKGRQDQSPHQG), 417–428 (QKGRQDQSPHQG), 429–440 (QKGRQDQSSHQG), 441–452 (QKGRQDQSSHQG), 453–464 (QKGRQDQSSHQG), 465–476 (QKGRQDQSSHQG), 477–488 (QREGQDQNSQWH), 489–500 (RTDSQGQSFHYG), 501–512 (QTGGHSLSSHQG), 513–524 (QTDSQGQNSNWH), 525–536 (RTDSQGQSFHYG), 537–548 (QTGGQGLSSHQG), 549–560 (QTDSQGQNSNWH), 561–572 (RTDSQGQSFHFD), 573–584 (QAGREVQGSHHG), 585–596 (QTDRQSQNSNWH), 597–608 (RTDSQGQSFHFD), 609–620 (QAGKEVQGSHQG), 621–632 (QTDSQGQSSHWH), 633–644 (QTDRQGQSSQQG), 645–656 (HKDRQGQNTHQG), 657–668 (QKGRQDLSPHQG), 669–680 (QKGRQDQSPHLG), 681–692 (QKGRHDQSPHQG), 693–704 (QKGRHDQSPHQG), 705–716 (QKGRQDLSSHQG), 717–728 (QKGRQDQSPHLG), 729–740 (QKGRHDQSPHRG), 741–752 (QKGRQDQSPHQG), 753–764 (QKGRQDQSSHQG), 765–776 (QREGQDQNSHWH), 777–788 (RTDRQGQSFHYG), 789–800 (QTGGQGLSSHQG), 801–812 (QTDSQGQNSQWH), 813–824 (RTDSQGQSFHFD), 825–836 (QAGREGQSSHHG), and 837–848 (QTDRQSQSSHCG). Residues 273 to 848 (QYGSQHQKSG…DRQSQSSHCG (576 aa)) form a 48 X 12 AA approximate tandem repeats of Q-[KT]-[GD]-[RS]-Q-[DG]-Q-S-[PS]-H-X-G region. The interval 321 to 764 (QKGRKDQSFQ…GRQDQSSHQG (444 aa)) is 22 X 12 AA approximate tandem repeats of Q-K-G-R-Q-D-Q-S-P-H-Q-G. 2 stretches are compositionally biased toward basic and acidic residues: residues 347 to 363 (GRQDQSPHRGQKGRQDQ) and 371 to 387 (GRQDQSPHRGQKGRQDQ). The segment covering 434–466 (DQSSHQGQKGRQDQSSHQGQKGRQDQSSHQGQK) has biased composition (polar residues). Basic and acidic residues predominate over residues 467–481 (GRQDQSSHQGQREGQ). Polar residues-rich tracts occupy residues 482-535 (DQNS…SFHY) and 543-570 (LSSHQGQTDSQGQNSNWHRTDSQGQSFH). 2 stretches are compositionally biased toward polar residues: residues 587-606 (DRQSQNSNWHRTDSQGQSFH) and 616-643 (GSHQGQTDSQGQSSHWHQTDRQGQSSQQ). Positions 710 to 726 (DLSSHQGQKGRQDQSPH) are enriched in polar residues. 2 stretches are compositionally biased toward basic and acidic residues: residues 731 to 747 (GRHDQSPHRGQKGRQDQ) and 755 to 769 (GRQDQSSHQGQREGQ). Polar residues-rich tracts occupy residues 795–822 (LSSHQGQTDSQGQNSQWHRTDSQGQSFH), 833–848 (SHHGQTDRQSQSSHCG), and 855–864 (TENQGQNRHS). The span at 865–875 (LGTDRTRRDSY) shows a compositional bias: basic and acidic residues. Polar residues predominate over residues 876–889 (VEQSGRSVKLSQQN). 5 stretches are compositionally biased toward basic and acidic residues: residues 890–908 (SREEVRQTQSQRSHDRREQ), 947–965 (EQDHCGEEEYQDWDRHSVE), 978–998 (THEEEQSHQTSDRQTHVDEQN), 1005–1045 (QTHE…KEKY), and 1056–1065 (PNREKSHMSE).

Belongs to the S100-fused protein family. In terms of processing, potential substrate of transglutaminase. Some arginines are probably converted to citrullines by peptidylarginine deimidase. As to expression, detectable in the stratified internal epithelia of forestomach and tongue and to a lesser degree in normal skin epidermis, where it is restricted to the differentiated suprabasal cell layers. Overexpressed in skin tumors.

It is found in the secreted. Its subcellular location is the extracellular space. It localises to the extracellular matrix. In terms of biological role, involved in the cornified cell envelope formation. Multifunctional epidermal matrix protein. This Mus musculus (Mouse) protein is Repetin (Rptn).